The primary structure comprises 24 residues: Calreticulin (24 aa).

This sequence belongs to the calreticulin family. In terms of assembly, monomer. Component of an EIF2 complex at least composed of CELF1/CUGBP1, CALR, CALR3, EIF2S1, EIF2S2, HSP90B1 and HSPA5. Interacts with PDIA3/ERp57 and SPACA9. Interacts with TRIM21. Interacts with NR3C1. Interacts with PPIB. Interacts (via P-domain) with PDIA5. Interacts with CLCC1. In terms of tissue distribution, pancreas.

The protein localises to the endoplasmic reticulum lumen. The protein resides in the cytoplasm. It localises to the cytosol. It is found in the cytolytic granule. Its subcellular location is the secreted. The protein localises to the extracellular space. The protein resides in the extracellular matrix. It localises to the cell surface. It is found in the sarcoplasmic reticulum lumen. Its subcellular location is the cytoplasmic vesicle. The protein localises to the secretory vesicle. The protein resides in the cortical granule. In terms of biological role, calcium-binding chaperone that promotes folding, oligomeric assembly and quality control in the endoplasmic reticulum (ER) via the calreticulin/calnexin cycle. This lectin interacts transiently with almost all of the monoglucosylated glycoproteins that are synthesized in the ER. Interacts with the DNA-binding domain of NR3C1 and mediates its nuclear export. Involved in maternal gene expression regulation. May participate in oocyte maturation via the regulation of calcium homeostasis. Present in the cortical granules of non-activated oocytes, is exocytosed during the cortical reaction in response to oocyte activation and might participate in the block to polyspermy. In Canis lupus familiaris (Dog), this protein is Calreticulin (CALR).